Consider the following 467-residue polypeptide: Transcription factor CRF1 (467 aa).

Residues 1–10 (MLLSAPVNST) are compositionally biased toward polar residues. 4 disordered regions span residues 1–42 (MLLS…VVLS), 62–110 (DFES…SSKT), 151–170 (SKSE…TNED), and 341–361 (TYRD…DRKR). The segment covering 11-23 (VRRKPHSPNKKKP) has biased composition (basic residues). Positions 28 to 42 (TAASFSSSSSTVVLS) are enriched in low complexity. Positions 89–102 (YSREENTNEVEEKT) are enriched in basic and acidic residues.

Interacts with FHL1 to form a repressor complex. The formation of the CRF1-FHL1 complex is inhibited by the TOR pathway. In terms of processing, phosphorylated by CDC28 and YAK1.

It is found in the cytoplasm. The protein localises to the nucleus. Functionally, transcription factor, corepressor with FHL1 of ribosomal protein genes. May be involved in the blocking of the spread of silencing. This Saccharomyces cerevisiae (strain ATCC 204508 / S288c) (Baker's yeast) protein is Transcription factor CRF1 (CRF1).